Consider the following 66-residue polypeptide: VRDAYIAQNYNCVYDCARDAYCNELCTKNGAKSGHCEWFGPHGDACWCIDLPNNVPIKVEGKCHRK.

One can recognise an LCN-type CS-alpha/beta domain in the interval 2–64; it reads RDAYIAQNYN…VPIKVEGKCH (63 aa). Disulfide bonds link cysteine 12-cysteine 63, cysteine 16-cysteine 36, cysteine 22-cysteine 46, and cysteine 26-cysteine 48.

The protein belongs to the long (4 C-C) scorpion toxin superfamily. Sodium channel inhibitor family. Alpha subfamily. In terms of tissue distribution, expressed by the venom gland.

It localises to the secreted. Its function is as follows. Alpha toxins bind voltage-independently at site-3 of sodium channels (Nav) and inhibit the inactivation of the activated channels, thereby blocking neuronal transmission. The chain is Toxin Boma6b from Buthus occitanus mardochei (Moroccan scorpion).